Consider the following 745-residue polypeptide: Protein PHOX1 (745 aa).

Over residues methionine 1–asparagine 10 the composition is skewed to basic residues. A disordered region spans residues methionine 1–alanine 37. 3 TPR repeats span residues alanine 52–aspartate 85, alanine 90–phenylalanine 125, and serine 126–asparagine 159. In terms of domain architecture, PB1 spans threonine 280–valine 359. TPR repeat units follow at residues glutamate 406–alanine 441, glutamate 443–asparagine 472, glutamate 494–phenylalanine 528, and glycine 553–methionine 586.

In terms of assembly, interacts with myosin XI-1 and XI-K.

The protein resides in the cytoplasmic vesicle membrane. Its function is as follows. Carboxylate clamp type tetratricopeptide repeat protein that may act as a potential Hsp90/Hsp70 co-chaperone. Contributes to polar growth of root hairs. The sequence is that of Protein PHOX1 from Arabidopsis thaliana (Mouse-ear cress).